The primary structure comprises 149 residues: Transcriptional repressor NrdR (149 aa).

A zinc finger spans residues 3–34; that stretch reads CPFCSTEETKVIDSRLVSDGYQVRRRRECTKC. In terms of domain architecture, ATP-cone spans 49–139; the sequence is PKIIKNNGMR…VYLSFENINE (91 aa).

It belongs to the NrdR family. It depends on Zn(2+) as a cofactor.

Its function is as follows. Negatively regulates transcription of bacterial ribonucleotide reductase nrd genes and operons by binding to NrdR-boxes. The chain is Transcriptional repressor NrdR from Mannheimia succiniciproducens (strain KCTC 0769BP / MBEL55E).